We begin with the raw amino-acid sequence, 1829 residues long: Protein let-418 (1829 aa).

2 stretches are compositionally biased toward acidic residues: residues 1–17 (MSTE…ESME) and 25–39 (ATEE…EQGD). Disordered stretches follow at residues 1 to 81 (MSTE…YNST) and 147 to 198 (MAAQ…SDQE). The span at 48 to 63 (RSSRKKGGKGGKKGSK) shows a compositional bias: basic residues. 2 PHD-type zinc fingers span residues 256–303 (NDYC…CIEH) and 317–365 (DEFC…CETV). Chromo domains follow at residues 401–458 (LKPP…PPEF) and 489–550 (MQIH…NEDI). A Helicase ATP-binding domain is found at 614-798 (RHCWSNGTDA…FHLLNFLSKE (185 aa)). ATP is bound at residue 627–634 (DEMGLGKT). The DEAH box motif lies at 749–752 (DEAH). Residues 930–1093 (LLQKMLRKLK…GKTMSKTELD (164 aa)) enclose the Helicase C-terminal domain. Disordered regions lie at residues 1168–1198 (ASYQ…EPDP), 1234–1289 (SENM…MPPL), 1415–1495 (AANG…ARPS), and 1745–1829 (NGER…PMET). Positions 1177-1186 (GQEEEEEEET) are enriched in acidic residues. 2 stretches are compositionally biased toward polar residues: residues 1234 to 1247 (SENM…QNQT) and 1418 to 1427 (GSAQGSSRST). Residues 1429–1444 (KPKEEPKEEPMEKEDA) show a composition bias toward basic and acidic residues. Over residues 1446-1455 (ETVNGATSEP) the composition is skewed to polar residues. The segment covering 1474–1490 (DEAKEPKEEPIETEKPR) has biased composition (basic and acidic residues). Over residues 1749–1773 (MEEDEPVEAEEEEGVKQEPDDETQD) the composition is skewed to acidic residues. Over residues 1792–1811 (DVPSTSAAAAVSSETAADAE) the composition is skewed to low complexity. Over residues 1819–1829 (APTDEPEPMET) the composition is skewed to acidic residues.

Component of the MEC (MEP-1-containing complex) complex that contains let-418, mep-1 and hda-1. Component of a NURD complex that contains let-418, hda-1, lin-40 and lin-53. Interacts with lin-1. Interacts with pie-1. Interacts with akir-1. In terms of tissue distribution, expressed in embryos and larva.

The protein resides in the nucleus. Part of a NuRD (Nucleosome Remodeling and Deacetylase) complex which is implicated in the synMuv B pathway that negatively regulates specification of vulval cell fate. This negative regulation is thought to be mediated via interaction with the promoter of lin-39, a key regulator in vulva development, and is dependent on the presence lin-1. Contributes to negative regulation of lag-2 which is expressed in the gut during larval development. Has a broad role in development. In association with akir-1, plays a role in regulating the transcription of antimicrobial peptide genes in response to fungal infection. This chain is Protein let-418, found in Caenorhabditis elegans.